The primary structure comprises 516 residues: GMP synthase [glutamine-hydrolyzing] (516 aa).

The 191-residue stretch at 8–198 folds into the Glutamine amidotransferase type-1 domain; that stretch reads KILILDFGSQ…ALNICKCDAL (191 aa). The active-site Nucleophile is Cys84. Catalysis depends on residues His172 and Glu174. Residues 199–391 enclose the GMPS ATP-PPase domain; it reads WNIENIIEND…LGLPYNMLYR (193 aa). Residue 226 to 232 participates in ATP binding; it reads SGGVDSS.

In terms of assembly, homodimer.

It catalyses the reaction XMP + L-glutamine + ATP + H2O = GMP + L-glutamate + AMP + diphosphate + 2 H(+). The protein operates within purine metabolism; GMP biosynthesis; GMP from XMP (L-Gln route): step 1/1. In terms of biological role, catalyzes the synthesis of GMP from XMP. The polypeptide is GMP synthase [glutamine-hydrolyzing] (Francisella philomiragia subsp. philomiragia (strain ATCC 25017 / CCUG 19701 / FSC 153 / O#319-036)).